We begin with the raw amino-acid sequence, 763 residues long: Ethylene receptor 2 (763 aa).

3 helical membrane-spanning segments follow: residues 58–78 (FLIAMAYFSIPLELLYFATCS), 86–106 (IVLQFGAFIVLCGLTHLITMF), and 115–135 (VVLALTVAKFLTALVSFATAI). Residues Cys97 and His101 each contribute to the Cu cation site. Residues 190-339 (DRHTILYTTM…VVADQVAVAL (150 aa)) enclose the GAF domain. The Histidine kinase domain maps to 382-615 (AMYDGMRRPM…TIMLALQFQL (234 aa)). Positions 641–760 (QVILVDSDDT…ALGDELYRVL (120 aa)) constitute a Response regulatory domain. Residue Asp692 is modified to 4-aspartylphosphate.

The protein belongs to the ethylene receptor family. Cu cation serves as cofactor. Post-translationally, autophosphorylated on serine, threonine and tyrosine residues.

It localises to the endoplasmic reticulum membrane. It carries out the reaction ATP + protein L-histidine = ADP + protein N-phospho-L-histidine.. Ethylene receptor related to bacterial two-component regulators. Acts as a negative regulator of ethylene signaling. May delay the transition from the vegetative stage to the floral stage by up-regulating GI (GIGANTEA) and RCN1 and cause starch accumulation in stems by down-regulating the alpha-amylase AMY3D. This Oryza sativa subsp. japonica (Rice) protein is Ethylene receptor 2.